Reading from the N-terminus, the 313-residue chain is tRNA dimethylallyltransferase (313 aa).

9 to 16 (GPTATGKS) provides a ligand contact to ATP. Position 11–16 (11–16 (TATGKS)) interacts with substrate.

The protein belongs to the IPP transferase family. As to quaternary structure, monomer. It depends on Mg(2+) as a cofactor.

It catalyses the reaction adenosine(37) in tRNA + dimethylallyl diphosphate = N(6)-dimethylallyladenosine(37) in tRNA + diphosphate. Catalyzes the transfer of a dimethylallyl group onto the adenine at position 37 in tRNAs that read codons beginning with uridine, leading to the formation of N6-(dimethylallyl)adenosine (i(6)A). In Mycobacteroides abscessus (strain ATCC 19977 / DSM 44196 / CCUG 20993 / CIP 104536 / JCM 13569 / NCTC 13031 / TMC 1543 / L948) (Mycobacterium abscessus), this protein is tRNA dimethylallyltransferase.